Consider the following 157-residue polypeptide: Protein Smg homolog (157 aa).

This sequence belongs to the Smg family.

The sequence is that of Protein Smg homolog from Shewanella loihica (strain ATCC BAA-1088 / PV-4).